A 335-amino-acid chain; its full sequence is MNQFYKRHFLRLLDFTPAEIIALLDLATELKKDKKSGCEQQKLVGKNIALIFEKDSTRTRCSFEVAAYDQGARVTYLGPGGSQIGHKESIKDTARVLGRMYDGIQYRGYGQRVVETLAEFAGVPVWNGLTNEFHPTQLLADLLTMREHLPNKSLNKMTLAYLGDTRNNMGNSLLEAAALVGMDLRLVAPKACWPEEAFVISCQALAQKTGGKITLTEDIAEGVNGADFLYTDVWVSMGEPKEVWQERITLLKPYQVNMRVLTLTGNPQVKFLHCLPAFHDDQTTIGKQMAEQYDLPGGMEVTEEVFESAHSIVFDQAENRLHTIKAVMVATMSKI.

Carbamoyl phosphate contacts are provided by residues 56–59, glutamine 83, arginine 107, and 134–137; these read STRT and HPTQ. Residues asparagine 168, aspartate 232, and 236–237 contribute to the L-ornithine site; that span reads SM. Residues 274–275 and arginine 320 contribute to the carbamoyl phosphate site; that span reads CL.

The protein belongs to the aspartate/ornithine carbamoyltransferase superfamily. OTCase family.

The protein resides in the cytoplasm. It catalyses the reaction carbamoyl phosphate + L-ornithine = L-citrulline + phosphate + H(+). It functions in the pathway amino-acid biosynthesis; L-arginine biosynthesis; L-arginine from L-ornithine and carbamoyl phosphate: step 1/3. Reversibly catalyzes the transfer of the carbamoyl group from carbamoyl phosphate (CP) to the N(epsilon) atom of ornithine (ORN) to produce L-citrulline. The sequence is that of Ornithine carbamoyltransferase from Yersinia pseudotuberculosis serotype I (strain IP32953).